We begin with the raw amino-acid sequence, 705 residues long: Protein arginine N-methyltransferase 7 (705 aa).

2 consecutive SAM-dependent MTase PRMT-type domains span residues 29–372 (QNSW…YSLW) and 381–705 (TKSV…QKKL).

Belongs to the class I-like SAM-binding methyltransferase superfamily. Protein arginine N-methyltransferase family. PRMT7 subfamily.

Functionally, essential arginine methyltransferase that can both catalyze the formation of omega-N monomethylarginine (MMA) and symmetrical dimethylarginine (sDMA). Specifically mediates the symmetrical dimethylation of arginine residues in the small nuclear ribonucleoproteins SmD1 and SmD3. The chain is Protein arginine N-methyltransferase 7 (Art7) from Drosophila simulans (Fruit fly).